The primary structure comprises 126 residues: Large ribosomal subunit protein uL22 (126 aa).

Belongs to the universal ribosomal protein uL22 family. In terms of assembly, part of the 50S ribosomal subunit.

This protein binds specifically to 23S rRNA; its binding is stimulated by other ribosomal proteins, e.g. L4, L17, and L20. It is important during the early stages of 50S assembly. It makes multiple contacts with different domains of the 23S rRNA in the assembled 50S subunit and ribosome. Functionally, the globular domain of the protein is located near the polypeptide exit tunnel on the outside of the subunit, while an extended beta-hairpin is found that lines the wall of the exit tunnel in the center of the 70S ribosome. The protein is Large ribosomal subunit protein uL22 of Jannaschia sp. (strain CCS1).